A 293-amino-acid chain; its full sequence is MAVSLNDIKNKIASTKNTSQITNAMQMVSAAKLGKSEEAAKNFQIYASKVRKLLTDLLHGHEAENAKYHPMLTSRPVKKTGYIVITSDRGLVGGYNATILKAMMELKAEYHPMGDDFEILCIGGVGADFCRARGVQPVYELRGLADQPSFDEVRKIINKAIEMYQNELFDELYVCYNHHVNSLTSQMRIEQMLPIIDLDPNEADEDYTVNLELESSREAILDQLLPQFAESMIYGAIIDAKTAENAAGMTAMQTATDNAKKVISDLTIQYNRARQAAITQEITEIVAGASALE.

This sequence belongs to the ATPase gamma chain family. As to quaternary structure, F-type ATPases have 2 components, CF(1) - the catalytic core - and CF(0) - the membrane proton channel. CF(1) has five subunits: alpha(3), beta(3), gamma(1), delta(1), epsilon(1). CF(0) has three main subunits: a, b and c.

It localises to the cell membrane. Its function is as follows. Produces ATP from ADP in the presence of a proton gradient across the membrane. The gamma chain is believed to be important in regulating ATPase activity and the flow of protons through the CF(0) complex. This is ATP synthase gamma chain from Streptococcus gordonii (strain Challis / ATCC 35105 / BCRC 15272 / CH1 / DL1 / V288).